We begin with the raw amino-acid sequence, 56 residues long: uncharacterized protein (56 aa).

It belongs to the archaeal ATPase family.

This is an uncharacterized protein from Methanocaldococcus jannaschii (strain ATCC 43067 / DSM 2661 / JAL-1 / JCM 10045 / NBRC 100440) (Methanococcus jannaschii).